The following is a 575-amino-acid chain: Putative diflavin flavoprotein A 4 (575 aa).

The interval 41–234 (QRGTTANSYL…LGARSYAPGH (194 aa)) is zinc metallo-hydrolase. One can recognise a Flavodoxin-like domain in the interval 263 to 405 (VALLYTSAYG…AGATFAQTLK (143 aa)). Residues 429–575 (VGRIIGSLCV…AVEHRKSGSH (147 aa)) are flavodoxin-reductase-like.

This sequence in the N-terminal section; belongs to the zinc metallo-hydrolase group 3 family. In the C-terminal section; belongs to the flavodoxin reductase family. Fe cation serves as cofactor.

Functionally, mediates electron transfer from NADH to oxygen, reducing it to water. This modular protein has 3 redox cofactors, in other organisms the same activity requires 2 or 3 proteins. This is Putative diflavin flavoprotein A 4 (dfa4) from Nostoc sp. (strain PCC 7120 / SAG 25.82 / UTEX 2576).